The primary structure comprises 283 residues: Polyamine aminopropyltransferase (283 aa).

Residues 5-240 (NTWFTEIHQD…GWWTATMACK (236 aa)) enclose the PABS domain. Position 33 (glutamine 33) interacts with S-methyl-5'-thioadenosine. Positions 64 and 88 each coordinate spermidine. Residues aspartate 108 and 139–140 (DG) contribute to the S-methyl-5'-thioadenosine site. Residue aspartate 158 is the Proton acceptor of the active site. A spermidine-binding site is contributed by 158–161 (DSTD). S-methyl-5'-thioadenosine is bound at residue proline 165.

This sequence belongs to the spermidine/spermine synthase family. As to quaternary structure, homodimer or homotetramer.

It is found in the cytoplasm. The enzyme catalyses S-adenosyl 3-(methylsulfanyl)propylamine + putrescine = S-methyl-5'-thioadenosine + spermidine + H(+). The protein operates within amine and polyamine biosynthesis; spermidine biosynthesis; spermidine from putrescine: step 1/1. In terms of biological role, catalyzes the irreversible transfer of a propylamine group from the amino donor S-adenosylmethioninamine (decarboxy-AdoMet) to putrescine (1,4-diaminobutane) to yield spermidine. This Thioalkalivibrio sulfidiphilus (strain HL-EbGR7) protein is Polyamine aminopropyltransferase.